A 665-amino-acid polypeptide reads, in one-letter code: RNA-directed RNA polymerase (665 aa).

It catalyses the reaction RNA(n) + a ribonucleoside 5'-triphosphate = RNA(n+1) + diphosphate. RNA-dependent RNA polymerase which replicates the viral genome. This is RNA-directed RNA polymerase from Atkinsonella hypoxylon (AhV).